Reading from the N-terminus, the 437-residue chain is Glutamyl-tRNA reductase (437 aa).

Residues threonine 49 to arginine 52, serine 109, glutamate 114 to glutamine 116, and glutamine 120 contribute to the substrate site. Cysteine 50 acts as the Nucleophile in catalysis. Residue glycine 198 to serine 203 participates in NADP(+) binding.

The protein belongs to the glutamyl-tRNA reductase family. As to quaternary structure, homodimer.

The enzyme catalyses (S)-4-amino-5-oxopentanoate + tRNA(Glu) + NADP(+) = L-glutamyl-tRNA(Glu) + NADPH + H(+). It functions in the pathway porphyrin-containing compound metabolism; protoporphyrin-IX biosynthesis; 5-aminolevulinate from L-glutamyl-tRNA(Glu): step 1/2. Its pathway is porphyrin-containing compound metabolism; chlorophyll biosynthesis. Its function is as follows. Catalyzes the NADPH-dependent reduction of glutamyl-tRNA(Glu) to glutamate 1-semialdehyde (GSA). The polypeptide is Glutamyl-tRNA reductase (Prochlorococcus marinus (strain SARG / CCMP1375 / SS120)).